A 6306-amino-acid polypeptide reads, in one-letter code: MSVFLGPGMPSASLLVNLLSALLILFVFGETEIRFTGQTEFVVNETSTTVIRLIIERIGEPANVTAIVSLYGEDAGDFFDTYAAAFIPAGETNRTVYIAVCDDDLPEPDETFIFHLTLQKPSANVKLGWPRTVTVTILSNDNAFGIISFNMLPSIAVSEPKGRNESMPLTLIREKGTYGMVMVTFEVEGGPNPPDEDLSPVKGNITFPPGRATVIYNLTVLDDEVPENDEIFLIQLKSVEGGAEINTSRNSIEIIIKKNDSPVRFLQSIYLVPEEDHILIIPVVRGKDNNGNLIGSDEYEVSISYAVTTGNSTAHAQQNLDFIDLQPNTTVVFPPFIHESHLKFQIVDDTIPEIAESFHIMLLKDTLQGDAVLISPSVVQVTIKPNDKPYGVLSFNSVLFERTVIIDEDRISRYEEITVVRNGGTHGNVSANWVLTRNSTDPSPVTADIRPSSGVLHFAQGQMLATIPLTVVDDDLPEEAEAYLLQILPHTIRGGAEVSEPAELLFYIQDSDDVYGLITFFPMENQKIESSPGERYLSLSFTRLGGTKGDVRLLYSVLYIPAGAVDPLQAKEGILNISRRNDLIFPEQKTQVTTKLPIRNDAFLQNGAHFLVQLETVELLNIIPLIPPISPRFGEICNISLLVTPAIANGEIGFLSNLPIILHEPEDFAAEVVYIPLHRDGTDGQATVYWSLKPSGFNSKAVTPDDIGPFNGSVLFLSGQSDTTINITIKGDDIPEMNETVTLSLDRVNVENQVLKSGYTSRDLIILENDDPGGVFEFSPASRGPYVIKEGESVELHIIRSRGSLVKQFLHYRVEPRDSNEFYGNTGVLEFKPGEREIVITLLARLDGIPELDEHYWVVLSSHGERESKLGSATIVNITILKNDDPHGIIEFVSDGLIVMINESKGDAIYSAVYDVVRNRGNFGDVSVSWVVSPDFTQDVFPVQGTVVFGDQEFSKNITIYSLPDEIPEEMEEFTVILLNGTGGAKVGNRTTATLRIRRNDDPIYFAEPRVVRVQEGETANFTVLRNGSVDVTCMVQYATKDGKATARERDFIPVEKGETLIFEVGSRQQSISIFVNEDGIPETDEPFYIILLNSTGDTVVYQYGVATVIIEANDDPNGIFSLEPIDKAVEEGKTNAFWILRHRGYFGSVSVSWQLFQNDSALQPGQEFYETSGTVNFMDGEEAKPIILHAFPDKIPEFNEFYFLKLVNISGGSPGPGGQLAETNLQVTVMVPFNDDPFGVFILDPECLEREVAEDVLSEDDMSYITNFTILRQQGVFGDVQLGWEILSSEFPAGLPPMIDFLLVGIFPTTVHLQQHMRRHHSGTDALYFTGLEGAFGTVNPKYHPSRNNTIANFTFSAWVMPNANTNGFIIAKDDGNGSIYYGVKIQTNESHVTLSLHYKTLGSNATYIAKTTVMKYLEESVWLHLLIILEDGIIEFYLDGNAMPRGIKSLKGEAITDGPGILRIGAGINGNDRFTGLMQDVRSYERKLTLEEIYELHAMPAKSDLHPISGYLEFRQGETNKSFIISARDDNDEEGEELFILKLVSVYGGARISEENTTARLTIQKSDNANGLFGFTGACIPEIAEEGSTISCVVERTRGALDYVHVFYTISQIETDGINYLVDDFANASGTITFLPWQRSEVLNIYVLDDDIPELNEYFRVTLVSAIPGDGKLGSTPTSGASIDPEKETTDITIKASDHPYGLLQFSTGLPPQPKDAMTLPASSVPHITVEEEDGEIRLLVIRAQGLLGRVTAEFRTVSLTAFSPEDYQNVAGTLEFQPGERYKYIFINITDNSIPELEKSFKVELLNLEGGVAELFRVDGSGSGDGDMEFFLPTIHKRASLGVASQILVTIAASDHAHGVFEFSPESLFVSGTEPEDGYSTVTLNVIRHHGTLSPVTLHWNIDSDPDGDLAFTSGNITFEIGQTSANITVEILPDEDPELDKAFSVSVLSVSSGSLGAHINATLTVLASDDPYGIFIFSEKNRPVKVEEATQNITLSIIRLKGLMGKVLVSYATLDDMEKPPYFPPNLARATQGRDYIPASGFALFGANQSEATIAISILDDDEPERSESVFIELLNSTLVAKVQSRSIPNSPRLGPKVETIAQLIIIANDDAFGTLQLSAPIVRVAENHVGPIINVTRTGGAFADVSVKFKAVPITAIAGEDYSIASSDVVLLEGETSKAVPIYVINDIYPELEESFLVQLMNETTGGARLGALTEAVIIIEASDDPYGLFGFQITKLIVEEPEFNSVKVNLPIIRNSGTLGNVTVQWVATINGQLATGDLRVVSGNVTFAPGETIQTLLLEVLADDVPEIEEVIQVQLTDASGGGTIGLDRIANIIIPANDDPYGTVAFAQMVYRVQEPLERSSCANITVRRSGGHFGRLLLFYSTSDIDVVALAMEEGQDLLSYYESPIQGVPDPLWRTWMNVSAVGEPLYTCATLCLKEQACSAFSFFSASEGPQCFWMTSWISPAVNNSDFWTYRKNMTRVASLFSGQAVAGSDYEPVTRQWAIMQEGDEFANLTVSILPDDFPEMDESFLISLLEVHLMNISASLKNQPTIGQPNISTVVIALNGDAFGVFVIYNISPNTSEDGLFVEVQEQPQTLVELMIHRTGGSLGQVAVEWRVVGGTATEGLDFIGAGEILTFAEGETKKTVILTILDDSEPEDDESIIVSLVYTEGGSRILPSSDTVRVNILANDNVAGIVSFQTASRSVIGHEGEILQFHVIRTFPGRGNVTVNWKIIGQNLELNFANFSGQLFFPEGSLNTTLFVHLLDDNIPEEKEVYQVILYDVRTQGVPPAGIALLDAQGYAAVLTVEASDEPHGVLNFALSSRFVLLQEANITIQLFINREFGSLGAINVTYTTVPGMLSLKNQTVGNLAEPEVDFVPIIGFLILEEGETAAAINITILEDDVPELEEYFLVNLTYVGLTMAASTSFPPRLDSEGLTAQVIIDANDGARGVIEWQQSRFEVNETHGSLTLVAQRSREPLGHVSLFVYAQNLEAQVGLDYIFTPMILHFADGERYKNVNIMILDDDIPEGDEKFQLILTNPSPGLELGKNTIALIIVLANDDGPGVLSFNNSEHFFLREPTALYVQESVAVLYIVREPAQGLFGTVTVQFIVTEVNSSNESKDLTPSKGYIVLEEGVRFKALQISAILDTEPEMDEYFVCTLFNPTGGARLGVHVQTLITVLQNQAPLGLFSISAVENRATSIDIEEANRTVYLNVSRTNGIDLAVSVQWETVSETAFGMRGMDVVFSVFQSFLDESASGWCFFTLENLIYGIMLRKSSVTVYRWQGIFIPVEDLNIENPKTCEAFNIGFSPYFVITHEERNEEKPSLNSVFTFTSGFKLFLVQTIIILESSQVRYFTSDSQDYLIIASQRDDSELTQVFRWNGGSFVLHQKLPVRGVLTVALFNKGGSVFLAISQANARLNSLLFRWSGSGFINFQEVPVSGTTEVEALSSANDIYLIFAENVFLGDQNSIDIFIWEMGQSSFRYFQSVDFAAVNRIHSFTPASGIAHILLIGQDMSALYCWNSERNQFSFVLEVPSAYDVASVTVKSLNSSKNLIALVGAHSHIYELAYISSHSDFIPSSGELIFEPGEREATIAVNILDDTVPEKEESFKVQLKNPKGGAEIGINDSVTITILSNDDAYGIVAFAQNSLYKQVEEMEQDSLVTLNVERLKGTYGRITIAWEADGSISDIFPTSGVILFTEGQVLSTITLTILADNIPELSEVVIVTLTRITTEGVEDSYKGATIDQDRSKSVITTLPNDSPFGLVGWRAASVFIRVAEPKENTTTLQLQIARDKGLLGDIAIHLRAQPNFLLHVDNQATENEDYVLQETIIIMKENIKEAHAEVSILPDDLPELEEGFIVTITEVNLVNSDFSTGQPSVRRPGMEIAEIMIEENDDPRGIFMFHVTRGAGEVITAYEVPPPLNVLQVPVVRLAGSFGAVNVYWKASPDSAGLEDFKPSHGILEFADKQVTAMIEITIIDDAEFELTETFNISLISVAGGGRLGDDVVVTVVIPQNDSPFGVFGFEEKTVMIDESLSSDDPDSYVTLTVVRSPGGKGTVRLEWTIDEKAKHNLSPLNGTLHFDETESQKTIVLHTLQDTVLEEDRRFTIQLISIDEVEISPVKGSASIIIRGDKRASGEVGIAPSSRHILIGEPSAKYNGTAIISLVRGPGILGEVTVFWRIFPPSVGEFAETSGKLTMRDEQSAVIVVIQALNDDIPEEKSFYEFQLTAVSEGGVLSESSSTANITVVASDSPYGRFAFSHEQLRVSEAQRVNITIIRSSGDFGHVRLWYKTMSGTAEAGLDFVPAAGELLFEAGEMRKSLHVEILDDDYPEGPEEFSLTITKVELQGRGYDFTIQENGLQIDQPPEIGNISIVRIIIMKNDNAEGIIEFDPKYTAFEVEEDVGLIMIPVVRLHGTYGYVTADFISQSSSASPGGVDYILHGSTVTFQHGQNLSFINISIIDDNESEFEEPIEILLTGATGGAVLGRHLVSRIIIAKSDSPFGVIRFLNQSKISIANPNSTMILSLVLERTGGLLGEIQVNWETVGPNSQEALLPQNRDIADPVSGLFYFGEGEGGVRTIILTIYPHEEIEVEETFIIKLHLVKGEAKLDSRAKDVTLTIQEFGDPNGVVQFAPETLSKKTYSEPLALEGPLLITFFVRRVKGTFGEIMVYWELSSEFDITEDFLSTSGFFTIADGESEASFDVHLLPDEVPEIEEDYVIQLVSVEGGAELDLEKSITWFSVYANDDPHGVFALYSDRQSILIGQNLIRSIQINITRLAGTFGDVAVGLRISSDHKEQPIVTENAERQLVVKDGATYKVDVVPIKNQVFLSLGSNFTLQLVTVMLVGGRFYGMPTILQEAKSAVLPVSEKAANSQVGFESTAFQLMNITAGTSHVMISRRGTYGALSVAWTTGYAPGLEIPEFIVVGNMTPTLGSLSFSHGEQRKGVFLWTFPSPGWPEAFVLHLSGVQSSAPGGAQLRSGFIVAEIEPMGVFQFSTSSRNIIVSEDTQMIRLHVQRLFGFHSDLIKVSYQTTAGSAKPLEDFEPVQNGELFFQKFQTEVDFEITIINDQLSEIEEFFYINLTSVEIRGLQKFDVNWSPRLNLDFSVAVITILDNDDLAGMDISFPETTVAVAVDTTLIPVETESTTYLSTSKTTTILQPTNVVAIVTEATGVSAIPEKLVTLHGTPAVSEKPDVATVTANVSIHGTFSLGPSIVYIEEEMKNGTFNTAEVLIRRTGGFTGNVSITVKTFGERCAQMEPNALPFRGIYGISNLTWAVEEEDFEEQTLTLIFLDGERERKVSVQILDDDEPEGQEFFYVFLTNPQGGAQIVEEKDDTGFAAFAMVIITGSDLHNGIIGFSEESQSGLELREGAVMRRLHLIVTRQPNRAFEDVKVFWRVTLNKTVVVLQKDGVNLVEELQSVSGTTTCTMGQTKCFISIELKPEKVPQVEVYFFVELYEATAGAAINNSARFAQIKILESDESQSLVYFSVGSRLAVAHKKATLISLQVARDSGTGLMMSVNFSTQELRSAETIGRTIISPAISGKDFVITEGTLVFEPGQRSTVLDVILTPETGSLNSFPKRFQIVLFDPKGGARIDKVYGTANITLVSDADSQAIWGLADQLHQPVNDDILNRVLHTISMKVATENTDEQLSAMMHLIEKITTEGKIQAFSVASRTLFYEILCSLINPKRKDTRGFSHFAEVTENFAFSLLTNVTCGSPGEKSKTILDSCPYLSILALHWYPQQINGHKFEGKEGDYIRIPERLLDVQDAEIMAGKSTCKLVQFTEYSSQQWFISGNNLPTLKNKVLSLSVKGQSSQLLTNDNEVLYRIYAAEPRIIPQTSLCLLWNQAAASWLSDSQFCKVVEETADYVECACSHMSVYAVYARTDNLSSYNEAFFTSGFICISGLCLAVLSHIFCARYSMFAAKLLTHMMAASLGTQILFLASAYASPQLAEESCSAMAAVTHYLYLCQFSWMLIQSVNFWYVLVMNDEHTERRYLLFFLLSWGLPAFVVILLIVILKGIYHQSMSQIYGLIHGDLCFIPNVYAALFTAALVPLTCLVVVFVVFIHAYQVKPQWKAYDDVFRGRTNAAEIPLILYLFALISVTWLWGGLHMAYRHFWMLVLFVIFNSLQGLYVFMVYFILHNQMCCPMKASYTVEMNGHPGPSTAFFTPGSGMPPAGGEISKSTQNLIGAMEEVPPDWERASFQQGSQASPDLKPSPQNGATFPSSGGYGQGSLIADEESQEFDDLIFALKTGAGLSVSDNESGQGSQEGGTLTDSQIVELRRIPIADTHL.

Residues 1–29 (MSVFLGPGMPSASLLVNLLSALLILFVFG) form the signal peptide. 22 consecutive Calx-beta domains span residues 30-117 (ETEI…FHLT), 133-237 (VTVT…IQLK), 262-362 (PVRF…HIML), 388-488 (KPYG…LQIL), 645-745 (PAIA…TLSL), 763-861 (DLII…VVLS), 876-979 (VNIT…VILL), 993-1093 (ATLR…IILL), 1108-1208 (TVII…LKLV), 1444-1544 (AMPR…FILK), 1564-1665 (TIQK…RVTL), 1710-1809 (TGLP…VELL), 1850-1952 (ILVT…VSVL), 1966-2079 (TLTV…IELL), 2107-2206 (QLII…VQLM), 2222-2324 (VIII…VQLT), 2441-2541 (TLCL…FLIS), 2584-2676 (NISP…VSLV), 2689-2789 (DTVR…QVIL), 2814-2925 (LTVE…VNLT), 2947-3048 (TAQV…LILT), and 3063-3172 (LIIV…CTLF). Residues 30 to 5908 (ETEIRFTGQT…TDNLSSYNEA (5879 aa)) are Extracellular-facing. EAR repeat units lie at residues 3255–3296 (VFSV…RWQG), 3297–3345 (IFIP…TFTS), 3348–3393 (KLFL…RWNG), 3395–3439 (SFVL…RWSG), 3441–3488 (GFIN…IWEM), and 3492–3534 (SFRY…CWNS). Calx-beta domains follow at residues 3525 to 3625 (DMSA…KVQL), 3639 to 3739 (SVTI…IVTL), 3775 to 3875 (GLVG…VTIT), 3899 to 4006 (AEIM…ISLI), 4020 to 4123 (VTVV…IQLI), 4139 to 4239 (IIIR…EFQL), 4255 to 4354 (ANIT…LTIT), 4387 to 4489 (RIII…ILLT), 4512 to 4612 (SPFG…IIKL), 4634 to 4734 (EFGD…VIQL), 4992 to 5095 (SGFI…INLT), 5288 to 5332 (AVEE…YVFL), and 5368 to 5468 (IGFS…FVEL). In terms of domain architecture, GAIN-B spans 5747-5903 (SILALHWYPQ…AVYARTDNLS (157 aa)). 2 disulfides stabilise this stretch: cysteine 5856-cysteine 5885 and cysteine 5873-cysteine 5887. Residues 5856-5903 (CLLWNQAAASWLSDSQFCKVVEETADYVECACSHMSVYAVYARTDNLS) are GPS. Residues 5909–5929 (FFTSGFICISGLCLAVLSHIF) form a helical membrane-spanning segment. Residues 5930–5939 (CARYSMFAAK) lie on the Cytoplasmic side of the membrane. The helical transmembrane segment at 5940–5960 (LLTHMMAASLGTQILFLASAY) threads the bilayer. Topologically, residues 5961–5979 (ASPQLAEESCSAMAAVTHY) are extracellular. The helical transmembrane segment at 5980 to 6000 (LYLCQFSWMLIQSVNFWYVLV) threads the bilayer. The Cytoplasmic segment spans residues 6001-6010 (MNDEHTERRY). Residues 6011 to 6031 (LLFFLLSWGLPAFVVILLIVI) form a helical membrane-spanning segment. Topologically, residues 6032–6059 (LKGIYHQSMSQIYGLIHGDLCFIPNVYA) are extracellular. The chain crosses the membrane as a helical span at residues 6060 to 6080 (ALFTAALVPLTCLVVVFVVFI). Topologically, residues 6081–6104 (HAYQVKPQWKAYDDVFRGRTNAAE) are cytoplasmic. Residues 6105-6125 (IPLILYLFALISVTWLWGGLH) traverse the membrane as a helical segment. Residues 6126 to 6133 (MAYRHFWM) lie on the Extracellular side of the membrane. A helical transmembrane segment spans residues 6134 to 6154 (LVLFVIFNSLQGLYVFMVYFI). At 6155–6306 (LHNQMCCPMK…RRIPIADTHL (152 aa)) the chain is on the cytoplasmic side. The segment at 6216 to 6248 (ASFQQGSQASPDLKPSPQNGATFPSSGGYGQGS) is disordered. Residues 6217–6240 (SFQQGSQASPDLKPSPQNGATFPS) are compositionally biased toward polar residues.

It belongs to the G-protein coupled receptor 2 family. Adhesion G-protein coupled receptor (ADGR) subfamily. In terms of assembly, forms a heterodimer, consisting of a large extracellular region (alpha subunit) non-covalently linked to a seven-transmembrane moiety (beta subunit). Component of USH2 complex, composed of ADGRV1, PDZD7, USH2A and WHRN. Interacts with USH2A and WHRN. Interacts (via the cytoplasmic region) with PDZD7. Interacts (via the cytoplasmic region) with MYO7A (via MyTH4-FERM domains). Post-translationally, autoproteolytically cleaved into 2 subunits, an extracellular alpha subunit and a seven-transmembrane subunit. In terms of tissue distribution, expressed at low levels in adult tissues.

It localises to the cell membrane. It is found in the cell projection. Its subcellular location is the stereocilium membrane. The protein resides in the photoreceptor inner segment. Its function is as follows. G-protein coupled receptor which has an essential role in the development of hearing and vision. Couples to G-alpha(i)-proteins, GNAI1/2/3, G-alpha(q)-proteins, GNAQ, as well as G-alpha(s)-proteins, GNAS, inhibiting adenylate cyclase (AC) activity and cAMP production. Required for the hair bundle ankle formation, which connects growing stereocilia in developing cochlear hair cells of the inner ear. In response to extracellular calcium, activates kinases PKA and PKC to regulate myelination by inhibiting the ubiquitination of MAG, thus enhancing the stability of this protein in myelin-forming cells of the auditory pathway. In retina photoreceptors, the USH2 complex is required for the maintenance of periciliary membrane complex that seems to play a role in regulating intracellular protein transport. Involved in the regulation of bone metabolism. In terms of biological role, cleaved ADGRV1 beta-subunit couples with G-alpha(i)-proteins, GNAI1/2/3, and constitutively inhibits adenylate cyclase (AC) activity with a stronger effect than full ADGRV1. The sequence is that of Adhesion G-protein coupled receptor V1 from Homo sapiens (Human).